The chain runs to 264 residues: Methionine aminopeptidase (264 aa).

Position 79 (histidine 79) interacts with substrate. A divalent metal cation-binding residues include aspartate 97, aspartate 108, and histidine 171. A substrate-binding site is contributed by histidine 178. Residues glutamate 204 and glutamate 235 each coordinate a divalent metal cation.

The protein belongs to the peptidase M24A family. Methionine aminopeptidase type 1 subfamily. As to quaternary structure, monomer. It depends on Co(2+) as a cofactor. Zn(2+) is required as a cofactor. Mn(2+) serves as cofactor. The cofactor is Fe(2+).

It catalyses the reaction Release of N-terminal amino acids, preferentially methionine, from peptides and arylamides.. Functionally, removes the N-terminal methionine from nascent proteins. The N-terminal methionine is often cleaved when the second residue in the primary sequence is small and uncharged (Met-Ala-, Cys, Gly, Pro, Ser, Thr, or Val). Requires deformylation of the N(alpha)-formylated initiator methionine before it can be hydrolyzed. The polypeptide is Methionine aminopeptidase (Buchnera aphidicola subsp. Acyrthosiphon pisum (strain APS) (Acyrthosiphon pisum symbiotic bacterium)).